Reading from the N-terminus, the 81-residue chain is Short neurotoxin 1 (81 aa).

An N-terminal signal peptide occupies residues 1-21 (MKTLLLTLVVVTIVFLDLGYT). Intrachain disulfides connect C24/C43, C38/C60, C62/C73, and C74/C79.

The protein belongs to the three-finger toxin family. Short-chain subfamily. Type I alpha-neurotoxin sub-subfamily. Expressed by the venom gland.

It is found in the secreted. Its function is as follows. Binds to muscle nicotinic acetylcholine receptor (nAChR) and inhibit acetylcholine from binding to the receptor, thereby impairing neuromuscular transmission. This Notechis scutatus scutatus (Mainland tiger snake) protein is Short neurotoxin 1.